The sequence spans 244 residues: Precorrin-6A reductase (244 aa).

This sequence belongs to the precorrin-6x reductase family.

It carries out the reaction precorrin-6B + NADP(+) = precorrin-6A + NADPH + 2 H(+). Its pathway is cofactor biosynthesis; adenosylcobalamin biosynthesis; cob(II)yrinate a,c-diamide from precorrin-2 (aerobic route): step 6/10. Catalyzes the reduction of the macrocycle of precorrin-6X into precorrin-6Y. In Mycobacterium tuberculosis (strain CDC 1551 / Oshkosh), this protein is Precorrin-6A reductase (cobK).